A 135-amino-acid chain; its full sequence is Antennal-specific protein OS-C (135 aa).

The N-terminal stretch at 1-27 (MGFHMGRQLLLSGFLLVMLQMVTQTQA) is a signal peptide. The tract at residues 43–84 (VIKREGDDDGDDDDSSSEETVEDSEESRRRRREVNTDNTPSA) is disordered. The span at 49–67 (DDDGDDDDSSSEETVEDSE) shows a compositional bias: acidic residues.

In terms of tissue distribution, antenna. In the third antennal segment. Expressed in sencilla coeloconica.

In Drosophila melanogaster (Fruit fly), this protein is Antennal-specific protein OS-C (Os-C).